The chain runs to 292 residues: Hydroxysqualene synthase (292 aa).

The protein belongs to the phytoene/squalene synthase family. HpnC subfamily.

The enzyme catalyses presqualene diphosphate + H2O = hydroxysqualene + diphosphate. It functions in the pathway secondary metabolite biosynthesis; hopanoid biosynthesis. Functionally, involved in the biosynthesis of the hopanoid precursor squalene (SQ) from farnesyl diphosphate (FPP). Catalyzes the second step, the conversion of presqualene diphosphate (PSPP) to hydroxysqualene (HSQ). The polypeptide is Hydroxysqualene synthase (Rhodopseudomonas palustris (strain ATCC BAA-98 / CGA009)).